A 167-amino-acid chain; its full sequence is Protein archease (167 aa).

Ala-2 carries the N-acetylalanine modification. 3 residues coordinate Ca(2+): Asp-39, Asp-166, and Ile-167.

It belongs to the archease family. Component of the tRNA-splicing ligase complex.

In terms of biological role, component of the tRNA-splicing ligase complex required to facilitate the enzymatic turnover of catalytic subunit RTCB. Together with DDX1, acts by facilitating the guanylylation of RTCB, a key intermediate step in tRNA ligation. This chain is Protein archease (ZBTB8OS), found in Bos taurus (Bovine).